Reading from the N-terminus, the 152-residue chain is S-ribosylhomocysteine lyase (152 aa).

H53, H57, and C120 together coordinate Fe cation.

This sequence belongs to the LuxS family. As to quaternary structure, homodimer. The cofactor is Fe cation.

The enzyme catalyses S-(5-deoxy-D-ribos-5-yl)-L-homocysteine = (S)-4,5-dihydroxypentane-2,3-dione + L-homocysteine. Functionally, involved in the synthesis of autoinducer 2 (AI-2) which is secreted by bacteria and is used to communicate both the cell density and the metabolic potential of the environment. The regulation of gene expression in response to changes in cell density is called quorum sensing. Catalyzes the transformation of S-ribosylhomocysteine (RHC) to homocysteine (HC) and 4,5-dihydroxy-2,3-pentadione (DPD). The polypeptide is S-ribosylhomocysteine lyase (Enterococcus faecalis (strain ATCC 700802 / V583)).